The following is a 947-amino-acid chain: MNNKKTATNRKGMIPNRLNKFSIRKYSVGTASILVGTTLIFGLSGHEAKAAEHTNGELNQSKNETTAPSENKTTKKVDSRQLKDNTQTATADQPKVTMSDSATVKETSSNMQSPQNATANQSTTKTSNVTTNDKSSTTYSNETDKSNLTQAKDVSTTPKTTTIKPRTLNRMAVNTVAAPQQGTNVNDKVHFSNIDIAIDKGHVNQTTGKTEFWATSSDVLKLKANYTIDDSVKEGDIFTFKYGQYFRPGSVRLPSQTQNLYNAQGNIIAKGIYDSTTNTTTYTFTNYVDQYTNVRGSFEQVAFAKRKNATTDKTAYKMEVTLGNDTYSEEIIVDYGNKKAQPLISSTNYINNEDLSRNMTAYVNQPKNTYTKQTFVTNLTGYKFNPNAKNFKIYEVTDQNQFVDSFTPDTSKLKDVTDQFDVIYSNDNKTATVDLMKGQTSSNKQYIIQQVAYPDNSSTDNGKIDYTLDTDKTKYSWSNSYSNVNGSSTANGDQKKYNLGDYVWEDTNKDGKQDANEKGIKGVYVILKDSNGKELDRTTTDENGKYQFTGLSNGTYSVEFSTPAGYTPTTANVGTDDAVDSDGLTTTGVIKDADNMTLDSGFYKTPKYSLGDYVWYDSNKDGKQDSTEKGIKGVKVTLQNEKGEVIGTTETDENGKYRFDNLDSGKYKVIFEKPAGLTQTGTNTTEDDKDADGGEVDVTITDHDDFTLDNGYYEEETSDSDSDSDSDSDSDSDSDSDSDSDSDSDSDSDSDSDSDSDSDSDSDSDSDSDSDSDSDSDSDSDSDSDSDSDSDSDSDSDSDSDSDSDSDSDSDSDSDSDSDSDSDSDSDSDSDSDSDSDSDSDSDSDSDSDSDSDSDSDSDSDSDSDSDSDSDSDSDNDSDSDSDSDSDAGKHTPAKPMSTVKDQHKTAKALPETGSENNNSNNGTLFGGLFAALGSLLLFGRRKKQNK.

Residues 1–50 form the signal peptide; it reads MNNKKTATNRKGMIPNRLNKFSIRKYSVGTASILVGTTLIFGLSGHEAKA. The segment at 51 to 164 is disordered; sequence AEHTNGELNQ…STTPKTTTIK (114 aa). The tract at residues 51–495 is ligand binding A region; that stretch reads AEHTNGELNQ…GSSTANGDQK (445 aa). The span at 56-71 shows a compositional bias: polar residues; sequence GELNQSKNETTAPSEN. Positions 72 to 83 are enriched in basic and acidic residues; it reads KTTKKVDSRQLK. Positions 84 to 155 are enriched in polar residues; sequence DNTQTATADQ…SNLTQAKDVS (72 aa). CNA-B domains follow at residues 496–606 and 607–717; these read KYNL…YKTP and KYSL…EEET. Positions 678-927 are disordered; the sequence is TQTGTNTTED…NNSNNGTLFG (250 aa). Acidic residues-rich tracts occupy residues 685-695 and 712-886; these read TEDDKDADGGE and YYEE…DSDS. The LPXTG sorting signal signature appears at 910–914; sequence LPETG. Residues 912-927 show a composition bias toward low complexity; that stretch reads ETGSENNNSNNGTLFG. Threonine 913 is subject to Pentaglycyl murein peptidoglycan amidated threonine. Positions 914 to 947 are cleaved as a propeptide — removed by sortase; the sequence is GSENNNSNNGTLFGGLFAALGSLLLFGRRKKQNK.

It belongs to the serine-aspartate repeat-containing protein (SDr) family. Homodimerizes; via N2-Domain. Interacts with host NRXN1; this interaction mediates bacterial attachment to host cells.

The protein resides in the secreted. Its subcellular location is the cell wall. Cell surface-associated calcium-binding protein which plays an important role in adhesion and pathogenesis. Mediates interactions with components of the extracellular matrix such as host NRXN1 to promote bacterial adhesion. The protein is Serine-aspartate repeat-containing protein C (sdrC) of Staphylococcus aureus (strain USA300).